The sequence spans 63 residues: Conotoxin Vi5.1b (63 aa).

The first 22 residues, 1–22, serve as a signal peptide directing secretion; sequence MLCVPVFIILFIIIPFAPTSES. A propeptide spanning residues 23-50 is cleaved from the precursor; that stretch reads QPKTKEEVAKASVHDNAERTLQRLWNQS. Pro62 carries the proline amide modification.

This sequence belongs to the conotoxin T superfamily. Contains 2 disulfide bonds that can be either 'C1-C3, C2-C4' or 'C1-C4, C2-C3', since these disulfide connectivities have been observed for conotoxins with cysteine framework V (for examples, see AC P0DQQ7 and AC P81755). As to expression, expressed by the venom duct.

It is found in the secreted. The chain is Conotoxin Vi5.1b from Conus virgo (Virgin cone).